The sequence spans 211 residues: Octanoyltransferase (211 aa).

The BPL/LPL catalytic domain maps to 32 to 207; the sequence is PCTYDEIWFV…ELSKFLEIFI (176 aa). Substrate is bound by residues 71–78, 138–140, and 151–153; these read RGGQITYH, SLG, and GLA. C169 acts as the Acyl-thioester intermediate in catalysis.

Belongs to the LipB family.

It is found in the cytoplasm. It carries out the reaction octanoyl-[ACP] + L-lysyl-[protein] = N(6)-octanoyl-L-lysyl-[protein] + holo-[ACP] + H(+). The protein operates within protein modification; protein lipoylation via endogenous pathway; protein N(6)-(lipoyl)lysine from octanoyl-[acyl-carrier-protein]: step 1/2. In terms of biological role, catalyzes the transfer of endogenously produced octanoic acid from octanoyl-acyl-carrier-protein onto the lipoyl domains of lipoate-dependent enzymes. Lipoyl-ACP can also act as a substrate although octanoyl-ACP is likely to be the physiological substrate. The sequence is that of Octanoyltransferase from Buchnera aphidicola subsp. Acyrthosiphon pisum (strain APS) (Acyrthosiphon pisum symbiotic bacterium).